The sequence spans 412 residues: Cytochrome P450-SOY (412 aa).

The span at 1-25 shows a compositional bias: polar residues; it reads MTESTTDPARQNLDPTSPAPATSFP. Residues 1–38 form a disordered region; sequence MTESTTDPARQNLDPTSPAPATSFPQDRGCPYHPPAGY. Position 361 (Cys361) interacts with heme.

This sequence belongs to the cytochrome P450 family. Requires heme as cofactor.

Its subcellular location is the cytoplasm. The chain is Cytochrome P450-SOY (cyp105D1) from Streptomyces griseus.